The chain runs to 352 residues: Nuclear receptor subfamily 1 group I member 3 (352 aa).

The segment at residues 8-83 is a DNA-binding region (nuclear receptor); that stretch reads LRNCVVCGDQ…AGMRKDMILS (76 aa). The segment at 11 to 31 adopts an NR C4-type zinc-finger fold; it reads CVVCGDQATGYHFNALTCEGC. Threonine 38 is modified (phosphothreonine; by PKC). Residues 47-71 form an NR C4-type zinc finger; the sequence is CPFAGSCEVSKIQRRHCPACRLQKC. Positions 109-352 constitute an NR LBD domain; that stretch reads EQEELIQTLL…MMPLLQEICS (244 aa).

Belongs to the nuclear hormone receptor family. NR1 subfamily. As to quaternary structure, heterodimer of NR1I3 and RXR. Interacts with PSMC4. Interacts with ECT2. Directly interacts with DNAJC7; this complex may also include HSP90. Interacts with CRY1. Interacts with CRY2 in a ligand-dependent manner. Phosphorylated at Thr-38 by PKC, dephosphorylation of Thr-38 is required for nuclear translocation and activation.

It localises to the nucleus. The protein resides in the cytoplasm. Its subcellular location is the cytoskeleton. Its function is as follows. Binds and transactivates the retinoic acid response elements that control expression of the retinoic acid receptor beta 2 and alcohol dehydrogenase 3 genes. Transactivates both the phenobarbital responsive element module of the human CYP2B6 gene and the CYP3A4 xenobiotic response element. The protein is Nuclear receptor subfamily 1 group I member 3 (NR1I3) of Macaca mulatta (Rhesus macaque).